The following is a 241-amino-acid chain: Microneme antigen (241 aa).

The N-terminal stretch at Met-1–Ser-34 is a signal peptide. Residues Ala-35 to His-103 constitute a propeptide that is removed on maturation. The segment covering His-61–Lys-83 has biased composition (basic and acidic residues). The disordered stretch occupies residues His-61–His-92. PAN domains follow at residues Cys-112 to Cys-181 and Cys-185 to Ser-241. Intrachain disulfides connect Cys-112–Cys-181, Cys-137–Cys-159, Cys-141–Cys-147, Cys-185–Cys-189, Cys-210–Cys-230, and Cys-214–Cys-220. Position 121 (Ser-121) interacts with a carbohydrate. A carbohydrate is bound by residues Lys-162, Tyr-169, and Asp-174.

Belongs to the microneme antigen family. As to quaternary structure, homodimer or heterodimer of major microneme antigen and microneme antigen. Post-translationally, contains six disulfide bonds.

It localises to the cytoplasmic vesicle. It is found in the secretory vesicle. Its subcellular location is the microneme. Functionally, galactose-binding lectin. Plays a role in adhesion to the host cell. Has a potential role in invasion of host cells. The polypeptide is Microneme antigen (Sarcocystis muris).